Here is a 321-residue protein sequence, read N- to C-terminus: NADH-ubiquinone oxidoreductase chain 1 (321 aa).

Helical transmembrane passes span 2-22 (LVML…VAFL), 71-91 (ALFI…WMFI), 104-124 (LLVI…SGWA), 148-168 (LGLI…QAFI), 173-193 (HTWF…STLA), 224-244 (LFFL…AIMF), 255-275 (ILPI…FLWI), and 295-315 (FLPL…SLGG).

This sequence belongs to the complex I subunit 1 family.

The protein resides in the mitochondrion inner membrane. It carries out the reaction a ubiquinone + NADH + 5 H(+)(in) = a ubiquinol + NAD(+) + 4 H(+)(out). Its function is as follows. Core subunit of the mitochondrial membrane respiratory chain NADH dehydrogenase (Complex I) that is believed to belong to the minimal assembly required for catalysis. Complex I functions in the transfer of electrons from NADH to the respiratory chain. The immediate electron acceptor for the enzyme is believed to be ubiquinone. This is NADH-ubiquinone oxidoreductase chain 1 (MT-ND1) from Lampetra fluviatilis (European river lamprey).